Reading from the N-terminus, the 120-residue chain is NAD(P)H-quinone oxidoreductase subunit 3, chloroplastic (120 aa).

3 helical membrane-spanning segments follow: residues 7–27 (YNYFWIFLLIASLIPTIAFSI), 64–84 (MFALVFVIFDVETVFLYPWAM), and 89–109 (LGIPAFIEVFIFVFILIIGLI).

It belongs to the complex I subunit 3 family. In terms of assembly, NDH is composed of at least 16 different subunits, 5 of which are encoded in the nucleus.

It localises to the plastid. The protein resides in the chloroplast thylakoid membrane. The enzyme catalyses a plastoquinone + NADH + (n+1) H(+)(in) = a plastoquinol + NAD(+) + n H(+)(out). It catalyses the reaction a plastoquinone + NADPH + (n+1) H(+)(in) = a plastoquinol + NADP(+) + n H(+)(out). In terms of biological role, NDH shuttles electrons from NAD(P)H:plastoquinone, via FMN and iron-sulfur (Fe-S) centers, to quinones in the photosynthetic chain and possibly in a chloroplast respiratory chain. The immediate electron acceptor for the enzyme in this species is believed to be plastoquinone. Couples the redox reaction to proton translocation, and thus conserves the redox energy in a proton gradient. In Anthoceros angustus (Hornwort), this protein is NAD(P)H-quinone oxidoreductase subunit 3, chloroplastic.